The following is a 215-amino-acid chain: Pyridoxine/pyridoxamine 5'-phosphate oxidase (215 aa).

Substrate is bound by residues 9–12 and lysine 69; that span reads RRDY. Residues 64–69, 79–80, lysine 86, and glutamine 108 contribute to the FMN site; these read RVLLLK and FT. The substrate site is built by tyrosine 126, arginine 130, and serine 134. Residues 143–144 and tryptophan 188 each bind FMN; that span reads QS. Substrate is bound at residue 194 to 196; the sequence is RLH. Arginine 198 lines the FMN pocket.

Belongs to the pyridoxamine 5'-phosphate oxidase family. Homodimer. Requires FMN as cofactor.

It carries out the reaction pyridoxamine 5'-phosphate + O2 + H2O = pyridoxal 5'-phosphate + H2O2 + NH4(+). It catalyses the reaction pyridoxine 5'-phosphate + O2 = pyridoxal 5'-phosphate + H2O2. The protein operates within cofactor metabolism; pyridoxal 5'-phosphate salvage; pyridoxal 5'-phosphate from pyridoxamine 5'-phosphate: step 1/1. Its pathway is cofactor metabolism; pyridoxal 5'-phosphate salvage; pyridoxal 5'-phosphate from pyridoxine 5'-phosphate: step 1/1. Catalyzes the oxidation of either pyridoxine 5'-phosphate (PNP) or pyridoxamine 5'-phosphate (PMP) into pyridoxal 5'-phosphate (PLP). The protein is Pyridoxine/pyridoxamine 5'-phosphate oxidase of Pseudomonas putida (strain W619).